We begin with the raw amino-acid sequence, 442 residues long: Adenylosuccinate synthetase (442 aa).

GTP-binding positions include 30-36 (GDEGKGK) and 58-60 (GHT). The active-site Proton acceptor is D31. Mg(2+)-binding residues include D31 and G58. Residues 31 to 34 (DEGK), 56 to 59 (NAGH), T148, R162, N241, T256, and R320 contribute to the IMP site. Residue H59 is the Proton donor of the active site. Position 316-322 (316-322 (TTTGRRR)) interacts with substrate. GTP contacts are provided by residues R322, 348–350 (KLD), and 430–432 (GVG).

The protein belongs to the adenylosuccinate synthetase family. Homodimer. Mg(2+) serves as cofactor.

It localises to the cytoplasm. It carries out the reaction IMP + L-aspartate + GTP = N(6)-(1,2-dicarboxyethyl)-AMP + GDP + phosphate + 2 H(+). The protein operates within purine metabolism; AMP biosynthesis via de novo pathway; AMP from IMP: step 1/2. Plays an important role in the de novo pathway and in the salvage pathway of purine nucleotide biosynthesis. Catalyzes the first committed step in the biosynthesis of AMP from IMP. The chain is Adenylosuccinate synthetase from Trichoplax adhaerens (Trichoplax reptans).